Here is a 292-residue protein sequence, read N- to C-terminus: MLKKYLFLTKPGILFGNFITTLGGFFLAAQGHVDFLLLILTLLGTTFVVASGCVVNNVIDQDIDQKMERTQNRALVKKTVSPSTALIFAFILGIIGFGILWFWVNPYSFSFAIIGFVVYVGFYSLWTKRTSIHQTIIGSISGASPPVIGYTAVTHQFDVAALLIFLAYGLWQMPHSWAIAIYRFDDYKNAGIPILPVARSVYRTKVECLIYIVLFAAVLNGLYCFGYTNVFFLLTFNVLTAYWLYLSIIGFKAENDQLWAKRLFLFSVILITLLSLSFSFTYQSPAPNLPLF.

9 consecutive transmembrane segments (helical) span residues 13-33, 35-55, 84-104, 106-126, 135-155, 161-181, 206-226, 231-251, and 263-283; these read ILFG…QGHV, FLLL…GCVV, TALI…WFWV, PYSF…YSLW, TIIG…AVTH, ALLI…AIAI, VECL…YCFG, FFLL…IIGF, and LFLF…FTYQ.

Belongs to the UbiA prenyltransferase family. Protoheme IX farnesyltransferase subfamily.

Its subcellular location is the cell inner membrane. The catalysed reaction is heme b + (2E,6E)-farnesyl diphosphate + H2O = Fe(II)-heme o + diphosphate. It participates in porphyrin-containing compound metabolism; heme O biosynthesis; heme O from protoheme: step 1/1. In terms of biological role, converts heme B (protoheme IX) to heme O by substitution of the vinyl group on carbon 2 of heme B porphyrin ring with a hydroxyethyl farnesyl side group. The protein is Protoheme IX farnesyltransferase of Acinetobacter baylyi (strain ATCC 33305 / BD413 / ADP1).